Here is a 365-residue protein sequence, read N- to C-terminus: MREETAEQPAPLRSGLTTGSCATATSLAAARLLLEGSNADAVQIILPKGKQVQMRLEFCRHTADGAEAGTIKDAGDDPDVTHGALLYSRVRLTPEPGIRFIAGQGVGTVTRPGLVLAVGEPAINPIPRRMIGEHLQRLAEERAYPGGFEVTVNVEGGAELALKTMNPRLGILGGLSILGTSGIVRPFSCAAYIASIHQGIDVAKTNGYLHIAACTGNASEDTMRRVYELPEIALIEMGDFVGAVLKHLRKVPVDKLSLCGGFGKISKLAAGHMDLHSRHSSIDLSQLAQWAADAGADPALQQAIRQANTSQQALAMASAAGVALGDAVCRHALDFARSVVPPQVQVEVFAIDRQGGIVGHAGGFQ.

The protein belongs to the CbiD family.

The enzyme catalyses Co-precorrin-5B + S-adenosyl-L-methionine = Co-precorrin-6A + S-adenosyl-L-homocysteine. Its pathway is cofactor biosynthesis; adenosylcobalamin biosynthesis; cob(II)yrinate a,c-diamide from sirohydrochlorin (anaerobic route): step 6/10. Functionally, catalyzes the methylation of C-1 in cobalt-precorrin-5B to form cobalt-precorrin-6A. In Pseudomonas fluorescens (strain ATCC BAA-477 / NRRL B-23932 / Pf-5), this protein is Cobalt-precorrin-5B C(1)-methyltransferase.